The chain runs to 219 residues: Guanylate kinase (219 aa).

The 180-residue stretch at glycine 15–lysine 194 folds into the Guanylate kinase-like domain. Serine 22–threonine 29 is a binding site for ATP.

This sequence belongs to the guanylate kinase family.

Its subcellular location is the cytoplasm. The enzyme catalyses GMP + ATP = GDP + ADP. Functionally, essential for recycling GMP and indirectly, cGMP. This chain is Guanylate kinase, found in Rhodopseudomonas palustris (strain BisB18).